Here is a 118-residue protein sequence, read N- to C-terminus: Protein TusC (118 aa).

It belongs to the DsrF/TusC family. As to quaternary structure, heterohexamer, formed by a dimer of trimers. The hexameric TusBCD complex contains 2 copies each of TusB, TusC and TusD. The TusBCD complex interacts with TusE.

It localises to the cytoplasm. Functionally, part of a sulfur-relay system required for 2-thiolation of 5-methylaminomethyl-2-thiouridine (mnm(5)s(2)U) at tRNA wobble positions. The chain is Protein TusC from Salmonella arizonae (strain ATCC BAA-731 / CDC346-86 / RSK2980).